The sequence spans 315 residues: Fucose-specific lectin (315 aa).

6 tandem repeats follow at residues 2–53 (STPG…KNVI), 54–103 (GNAK…GGAK), 104–155 (FQVA…LGGA), 156–207 (LPGT…TIFD), 208–260 (RAPP…ITPV), and 261–315 (IQGS…LPPA). The 6 X approximate tandem repeats stretch occupies residues 2-315 (STPGAQQVLF…QLGRSALPPA (314 aa)). Alpha-L-fucose contacts are provided by Arg25, Glu37, Trp44, Arg73, Glu85, Trp94, Gly98, Arg126, Glu138, Trp146, Thr150, Arg177, Gln189, Trp198, Arg230, and Gln242. Zn(2+)-binding residues include Cys244, Asp246, and His252. Alpha-L-fucose is bound by residues Arg282 and Glu296.

The protein belongs to the fungal fucose-specific lectin family. Homodimer.

Multispecific lectin that is able to recognize L-fucose in all possible linkages. These could be found not only in decomposed plant matter in soil, which is the natural environment for A.fumigatus, but also in various epitopes on human tissues. Mediates binding of A.fumigatus conidia to airway mucin in a fucose dependent manner. Stimulates IL-8 production by human bronchial cells in a dose-dependent manner, contributing to the inflammatory response observed upon the exposure of a patient to A.fumigatus, and thus might be an important virulence factor involved in an early stage of A.fumigatus infection. This is Fucose-specific lectin from Aspergillus fumigatus (strain ATCC MYA-4609 / CBS 101355 / FGSC A1100 / Af293) (Neosartorya fumigata).